The chain runs to 33 residues: Protamine TP14 (33 aa).

The tract at residues 1–33 (MPRRRRSSRPPVRRRRRPRVSRRRRRRGGRRRR) is disordered.

As to expression, testis.

It is found in the nucleus. It localises to the chromosome. In terms of biological role, protamines substitute for histones in the chromatin of sperm during the haploid phase of spermatogenesis. They compact sperm DNA into a highly condensed, stable and inactive complex. The protein is Protamine TP14 of Oncorhynchus mykiss (Rainbow trout).